We begin with the raw amino-acid sequence, 225 residues long: UPF0758 protein BCE33L4198 (225 aa).

One can recognise an MPN domain in the interval 103–225 (SIRNPEDCAR…FVSLKEKGHI (123 aa)). The Zn(2+) site is built by His-174, His-176, and Asp-187. The short motif at 174–187 (HNHPSGDPAPSRED) is the JAMM motif element.

Belongs to the UPF0758 family.

The sequence is that of UPF0758 protein BCE33L4198 from Bacillus cereus (strain ZK / E33L).